Consider the following 315-residue polypeptide: uncharacterized protein (315 aa).

Belongs to the carbohydrate kinase PfkB family.

This is an uncharacterized protein from Escherichia coli (strain K12).